Consider the following 156-residue polypeptide: Endoribonuclease YbeY (156 aa).

His-117, His-121, and His-127 together coordinate Zn(2+).

It belongs to the endoribonuclease YbeY family. Requires Zn(2+) as cofactor.

The protein localises to the cytoplasm. In terms of biological role, single strand-specific metallo-endoribonuclease involved in late-stage 70S ribosome quality control and in maturation of the 3' terminus of the 16S rRNA. This is Endoribonuclease YbeY from Shewanella pealeana (strain ATCC 700345 / ANG-SQ1).